The primary structure comprises 261 residues: Indole-3-glycerol phosphate synthase (261 aa).

It belongs to the TrpC family.

The enzyme catalyses 1-(2-carboxyphenylamino)-1-deoxy-D-ribulose 5-phosphate + H(+) = (1S,2R)-1-C-(indol-3-yl)glycerol 3-phosphate + CO2 + H2O. It participates in amino-acid biosynthesis; L-tryptophan biosynthesis; L-tryptophan from chorismate: step 4/5. This Burkholderia thailandensis (strain ATCC 700388 / DSM 13276 / CCUG 48851 / CIP 106301 / E264) protein is Indole-3-glycerol phosphate synthase.